The sequence spans 140 residues: ATP synthase epsilon chain (140 aa).

This sequence belongs to the ATPase epsilon chain family. In terms of assembly, F-type ATPases have 2 components, CF(1) - the catalytic core - and CF(0) - the membrane proton channel. CF(1) has five subunits: alpha(3), beta(3), gamma(1), delta(1), epsilon(1). CF(0) has three main subunits: a, b and c.

Its subcellular location is the cell inner membrane. In terms of biological role, produces ATP from ADP in the presence of a proton gradient across the membrane. This Thermodesulfovibrio yellowstonii (strain ATCC 51303 / DSM 11347 / YP87) protein is ATP synthase epsilon chain.